The primary structure comprises 481 residues: ATP synthase subunit beta (481 aa).

Position 167–174 (167–174) interacts with ATP; sequence GGAGVGKT.

The protein belongs to the ATPase alpha/beta chains family. In terms of assembly, F-type ATPases have 2 components, CF(1) - the catalytic core - and CF(0) - the membrane proton channel. CF(1) has five subunits: alpha(3), beta(3), gamma(1), delta(1), epsilon(1). CF(0) has three main subunits: a(1), b(2) and c(9-12). The alpha and beta chains form an alternating ring which encloses part of the gamma chain. CF(1) is attached to CF(0) by a central stalk formed by the gamma and epsilon chains, while a peripheral stalk is formed by the delta and b chains.

Its subcellular location is the cell membrane. It carries out the reaction ATP + H2O + 4 H(+)(in) = ADP + phosphate + 5 H(+)(out). Functionally, produces ATP from ADP in the presence of a proton gradient across the membrane. The catalytic sites are hosted primarily by the beta subunits. The protein is ATP synthase subunit beta of Corynebacterium efficiens (strain DSM 44549 / YS-314 / AJ 12310 / JCM 11189 / NBRC 100395).